Here is a 294-residue protein sequence, read N- to C-terminus: Cuticle collagen 144 (294 aa).

An N-terminal signal peptide occupies residues methionine 1 to threonine 30. Pro residues predominate over residues threonine 100 to proline 112. 2 disordered regions span residues threonine 100 to proline 134 and proline 148 to alanine 278. Triple-helical region stretches follow at residues proline 102 to aspartate 127 and glycine 153 to proline 274. Low complexity-rich tracts occupy residues alanine 164–aspartate 209 and alanine 219–proline 265.

As to quaternary structure, collagen polypeptide chains are complexed within the cuticle by disulfide bonds and other types of covalent cross-links.

Nematode cuticles are composed largely of collagen-like proteins. The cuticle functions both as an exoskeleton and as a barrier to protect the worm from its environment. The polypeptide is Cuticle collagen 144 (Caenorhabditis briggsae).